A 94-amino-acid chain; its full sequence is Co-chaperonin GroES (94 aa).

This sequence belongs to the GroES chaperonin family. Heptamer of 7 subunits arranged in a ring. Interacts with the chaperonin GroEL.

Its subcellular location is the cytoplasm. Its function is as follows. Together with the chaperonin GroEL, plays an essential role in assisting protein folding. The GroEL-GroES system forms a nano-cage that allows encapsulation of the non-native substrate proteins and provides a physical environment optimized to promote and accelerate protein folding. GroES binds to the apical surface of the GroEL ring, thereby capping the opening of the GroEL channel. In Exiguobacterium sp. (strain ATCC BAA-1283 / AT1b), this protein is Co-chaperonin GroES.